A 121-amino-acid polypeptide reads, in one-letter code: SPbeta prophage-derived uncharacterized protein YorW (121 aa).

This Bacillus subtilis (strain 168) protein is SPbeta prophage-derived uncharacterized protein YorW (yorW).